Consider the following 1522-residue polypeptide: ATP-binding cassette sub-family C member 3 (1522 aa).

The Extracellular portion of the chain corresponds to 1-32; sequence MDRLCGSGELGSKFWDSNLTVYTNTPDLTPCF. Residue asparagine 18 is glycosylated (N-linked (GlcNAc...) asparagine). Residues 33–53 traverse the membrane as a helical segment; it reads QNSLLAWVPCIYLWAALPCYL. Residues 54–73 lie on the Cytoplasmic side of the membrane; sequence FYLRHHRLGYIVLSCLSRLK. A helical transmembrane segment spans residues 74-94; sequence TALGVLLWCISWVDLFYSFHG. The Extracellular segment spans residues 95 to 99; the sequence is LVHGS. Residues 100–120 form a helical membrane-spanning segment; sequence SPAPVFFITPLLVGITMLLAT. Topologically, residues 121 to 132 are cytoplasmic; it reads LLIQYERLRGVR. The helical transmembrane segment at 133–153 threads the bilayer; the sequence is SSGVLIIFWLLCVICAIIPFR. Over 154-171 the chain is Extracellular; sequence SKILLALAEGKILDPFRF. Residues 172–192 form a helical membrane-spanning segment; sequence TTFYIYFALVLCAFILSCFQE. The Cytoplasmic segment spans residues 193 to 301; it reads KPPLFSPENL…KTKKPSFLRA (109 aa). The chain crosses the membrane as a helical span at residues 302-322; it reads LVRTFTSSLLMGACFKLIQDL. One can recognise an ABC transmembrane type-1 1 domain in the interval 310–592; it reads LLMGACFKLI…LPQLISGMTQ (283 aa). At 323–347 the chain is on the extracellular side; sequence SPSSTHSCSASSSGLFRPHGPYWWG. The helical transmembrane segment at 348-368 threads the bilayer; the sequence is FLLAGLMFVSSTMQTLILHQH. The Cytoplasmic portion of the chain corresponds to 369–424; that stretch reads YHCIFVMALRIRTAIIGVIYRKALTITNSVKREYTVGEMVNLMSVDAQRFMDVSPF. Residues 425–445 traverse the membrane as a helical segment; sequence INLLWSAPLQVILAIYFLWQI. The Extracellular segment spans residues 446–448; that stretch reads LGP. A helical membrane pass occupies residues 449–469; the sequence is SALAGVAVIVLLIPLNGAVSM. The Cytoplasmic segment spans residues 470–531; that stretch reads KMKTYQVQQM…LLRKGAYLQA (62 aa). Residues 532-552 form a helical membrane-spanning segment; it reads ISTFIWVCTPFMVTLITLGVY. Over 553-574 the chain is Extracellular; the sequence is VCVDKNNVLDAEKAFVSLSLFN. The chain crosses the membrane as a helical span at residues 575 to 595; the sequence is ILKIPLNLLPQLISGMTQTSV. Residues 596–958 lie on the Cytoplasmic side of the membrane; it reads SLKRIQDFLN…VKLSVYWDYA (363 aa). Positions 625–849 constitute an ABC transporter 1 domain; that stretch reads ITIHNGTFSW…DGSFANFLRN (225 aa). ATP is bound at residue 659 to 666; it reads GPVGCGKS. Phosphoserine occurs at positions 902 and 905. The chain crosses the membrane as a helical span at residues 959 to 979; that stretch reads KSVGLCTTLFICLLYAGQNAV. In terms of domain architecture, ABC transmembrane type-1 2 spans 966–1247; that stretch reads TLFICLLYAG…MIRTLSDLES (282 aa). The Extracellular segment spans residues 980–1016; sequence AIGANVWLSAWTNDVEEHGQQNNTSVRLGVYATLGIL. N-linked (GlcNAc...) asparagine glycosylation is found at asparagine 1001 and asparagine 1002. A helical transmembrane segment spans residues 1017–1037; the sequence is QGLLVMLSAFTMVVGAIQAAR. Over 1038–1080 the chain is Cytoplasmic; the sequence is LLHTALLHNQIRAPQSFFDTTPSGRILNRFSKDIYVIHEVLAP. A helical membrane pass occupies residues 1081–1101; the sequence is TILMLFNSFYTSISTIVVIVA. Serine 1102 is a topological domain (extracellular). A helical transmembrane segment spans residues 1103–1123; it reads TPLFCVVVLPLAVFYGFVQRF. At 1124–1194 the chain is on the cytoplasmic side; that stretch reads YVATSRQLKR…ASNRWLGVHV (71 aa). The helical transmembrane segment at 1195–1215 threads the bilayer; it reads EFVGNCVVLFSALFAVIGRNS. Topologically, residues 1216 to 1217 are extracellular; that stretch reads LN. Residues 1218-1238 form a helical membrane-spanning segment; the sequence is PGLVGLSVSYALQVTLSLNWM. Over 1239-1522 the chain is Cytoplasmic; sequence IRTLSDLESN…YGMAKDAGLA (284 aa). The region spanning 1286–1518 is the ABC transporter 2 domain; sequence FRNYSVRYRP…GGIFYGMAKD (233 aa). 1318 to 1325 serves as a coordination point for ATP; sequence GRTGAGKS.

This sequence belongs to the ABC transporter superfamily. ABCC family. Conjugate transporter (TC 3.A.1.208) subfamily. As to expression, expressed in lung, ileum, colon and liver. Higher in liver of Eisai hyperbilirubinemic rats.

The protein localises to the basolateral cell membrane. It is found in the basal cell membrane. The catalysed reaction is an S-substituted glutathione(in) + ATP + H2O = an S-substituted glutathione(out) + ADP + phosphate + H(+). It carries out the reaction ATP + H2O + xenobioticSide 1 = ADP + phosphate + xenobioticSide 2.. It catalyses the reaction taurocholate(in) + ATP + H2O = taurocholate(out) + ADP + phosphate + H(+). The enzyme catalyses glycocholate(in) + ATP + H2O = glycocholate(out) + ADP + phosphate + H(+). The catalysed reaction is taurolithocholate 3-sulfate(in) + ATP + H2O = taurolithocholate 3-sulfate(out) + ADP + phosphate + H(+). It carries out the reaction 17beta-estradiol 17-O-(beta-D-glucuronate)(in) + ATP + H2O = 17beta-estradiol 17-O-(beta-D-glucuronate)(out) + ADP + phosphate + H(+). It catalyses the reaction dehydroepiandrosterone 3-sulfate(in) + ATP + H2O = dehydroepiandrosterone 3-sulfate(out) + ADP + phosphate + H(+). The enzyme catalyses leukotriene C4(in) + ATP + H2O = leukotriene C4(out) + ADP + phosphate + H(+). The catalysed reaction is (4Z,15Z)-bilirubin IXalpha C8-beta-D-glucuronoside(in) + ATP + H2O = (4Z,15Z)-bilirubin IXalpha C8-beta-D-glucuronoside(out) + ADP + phosphate + H(+). It carries out the reaction (4Z,15Z)-bilirubin IXalpha C8,C12-beta-D-bisglucuronoside(in) + ATP + H2O = (4Z,15Z)-bilirubin IXalpha C8,C12-beta-D-bisglucuronoside(out) + ADP + phosphate + H(+). It catalyses the reaction taurochenodeoxycholate 3-sulfate(in) + ATP + H2O = taurochenodeoxycholate 3-sulfate(out) + ADP + phosphate + H(+). ATP-dependent transporter of the ATP-binding cassette (ABC) family that binds and hydrolyzes ATP to enable active transport of various substrates including many drugs, toxicants and endogenous compound across cell membranes. Transports glucuronide conjugates such as bilirubin diglucuronide, estradiol-17-beta-o-glucuronide and GSH conjugates such as leukotriene C4 (LTC4). Transports also various bile salts (taurocholate, glycocholate, taurochenodeoxycholate-3-sulfate, taurolithocholate- 3-sulfate). Does not contribute substantially to bile salt physiology but provides an alternative route for the export of bile acids and glucuronides from cholestatic hepatocytes. May contribute to regulate the transport of organic compounds in testes across the blood-testis-barrier. In Rattus norvegicus (Rat), this protein is ATP-binding cassette sub-family C member 3 (Abcc3).